The chain runs to 214 residues: Ceramide-1-phosphate transfer protein (214 aa).

5 residues coordinate an N-acylsphingoid base 1-phosphate: Asp56, Lys60, Arg106, Arg110, and His150.

Belongs to the GLTP family.

The protein localises to the cytoplasm. It is found in the cytosol. Its subcellular location is the golgi apparatus. It localises to the trans-Golgi network membrane. The protein resides in the cell membrane. The protein localises to the endosome membrane. It is found in the nucleus outer membrane. It catalyses the reaction N-(hexadecanoyl)-sphing-4-enine-1-phosphate(in) = N-(hexadecanoyl)-sphing-4-enine-1-phosphate(out). It carries out the reaction N-(9Z-octadecenoyl)-sphing-4-enine-1-phosphate(in) = N-(9Z-octadecenoyl)-sphing-4-enine-1-phosphate(out). Functionally, mediates the intracellular transfer of ceramide-1-phosphate (C1P) between organelle membranes and the cell membrane. Required for normal structure of the Golgi stacks. Can bind phosphoceramides with a variety of aliphatic chains, but has a preference for lipids with saturated C16:0 or monounsaturated C18:1 aliphatic chains, and is inefficient with phosphoceramides containing lignoceryl (C24:0). Plays a role in the regulation of the cellular levels of ceramide-1-phosphate, and thereby contributes to the regulation of phospholipase PLA2G4A activity and the release of arachidonic acid. Has no activity with galactosylceramide, lactosylceramide, sphingomyelin, phosphatidylcholine, phosphatidic acid and ceramide. C1P transfer is stimulated by phosphatidylserine in C1P source vesicles. Regulates autophagy, inflammasome mediated IL1B and IL18 processing, and pyroptosis, but not apoptosis. This Bos taurus (Bovine) protein is Ceramide-1-phosphate transfer protein (CPTP).